Here is a 433-residue protein sequence, read N- to C-terminus: Zinc finger and SCAN domain-containing protein 4 (433 aa).

Residues 44 to 126 (RMVLNSFQDS…RFIEDLTDDS (83 aa)) enclose the SCAN box domain. Polar residues-rich tracts occupy residues 165–185 (TTREANMGTPSQTSQDTSLET), 195–210 (GWNSSSKTTRVNENIT), and 277–299 (QPEQSSPESALTHQSNEGNSTCE). Disordered regions lie at residues 165–210 (TTRE…ENIT) and 275–301 (ISQPEQSSPESALTHQSNEGNSTCEVH). C2H2-type zinc fingers lie at residues 312-334 (YKCEECPKVFKYLCHLLAHQRRH), 340-362 (FVCPECQKGFFQISDLRVHQIIH), 368-390 (FTCSMCKKSFSHKTNLRSHERIH), and 396-418 (YTCPFCKTSYRQSSTYHRHMRTH).

It localises to the nucleus. It is found in the chromosome. The protein localises to the telomere. In terms of biological role, embryonic stem (ES) cell-specific transcription factor required to regulate ES cell pluripotency. Binds telomeres and plays a key role in genomic stability in ES cells by regulating telomere elongation. Acts as an activator of spontaneous telomere sister chromatid exchange (T-SCE) and telomere elongation in undifferentiated ES cells. This is Zinc finger and SCAN domain-containing protein 4 (ZSCAN4) from Homo sapiens (Human).